A 495-amino-acid chain; its full sequence is ATP synthase subunit beta, chloroplastic (495 aa).

G172 to T179 contributes to the ATP binding site.

This sequence belongs to the ATPase alpha/beta chains family. As to quaternary structure, F-type ATPases have 2 components, CF(1) - the catalytic core - and CF(0) - the membrane proton channel. CF(1) has five subunits: alpha(3), beta(3), gamma(1), delta(1), epsilon(1). CF(0) has four main subunits: a(1), b(1), b'(1) and c(9-12).

It localises to the plastid. Its subcellular location is the chloroplast thylakoid membrane. It catalyses the reaction ATP + H2O + 4 H(+)(in) = ADP + phosphate + 5 H(+)(out). Functionally, produces ATP from ADP in the presence of a proton gradient across the membrane. The catalytic sites are hosted primarily by the beta subunits. In Scilla messeniaca (Greek squill), this protein is ATP synthase subunit beta, chloroplastic.